Here is a 208-residue protein sequence, read N- to C-terminus: uncharacterized protein (208 aa).

Residues 1-18 show a composition bias toward basic and acidic residues; the sequence is MSPTKDSHPSPHFPRDSG. 2 disordered regions span residues 1–122 and 135–208; these read MSPT…LPPP and RECH…TPDG.

This is an uncharacterized protein from Homo sapiens (Human).